We begin with the raw amino-acid sequence, 311 residues long: Delta(1)-pyrroline-2-carboxylate reductase 2 (311 aa).

The protein belongs to the ornithine cyclodeaminase/mu-crystallin family.

It carries out the reaction L-proline + NAD(+) = 1-pyrroline-2-carboxylate + NADH + H(+). It catalyses the reaction L-proline + NADP(+) = 1-pyrroline-2-carboxylate + NADPH + H(+). Catalyzes the reduction of Delta(1)-pyrroline-2-carboxylate (Pyr2C) to L-proline, using preferentially NADPH over NADH as the electron donor. May be involved in a degradation pathway that converts trans-3-hydroxy-L-proline (t3LHyp) to L-proline. This Burkholderia ambifaria (strain ATCC BAA-244 / DSM 16087 / CCUG 44356 / LMG 19182 / AMMD) (Burkholderia cepacia (strain AMMD)) protein is Delta(1)-pyrroline-2-carboxylate reductase 2.